Here is a 146-residue protein sequence, read N- to C-terminus: Ribonuclease H (146 aa).

The RNase H type-1 domain occupies 4-145; it reads ELNKVVIYTD…ADMLARSQIV (142 aa). Mg(2+)-binding residues include D13, E51, D73, and D137.

It belongs to the RNase H family. Monomer. Mg(2+) is required as a cofactor.

It localises to the cytoplasm. The enzyme catalyses Endonucleolytic cleavage to 5'-phosphomonoester.. Its function is as follows. Endonuclease that specifically degrades the RNA of RNA-DNA hybrids. In Ehrlichia chaffeensis (strain ATCC CRL-10679 / Arkansas), this protein is Ribonuclease H.